A 213-amino-acid polypeptide reads, in one-letter code: Uracil phosphoribosyltransferase (213 aa).

Residues Arg78, Arg103, and 130-138 contribute to the 5-phospho-alpha-D-ribose 1-diphosphate site; that span reads DPMLATGGS. Uracil contacts are provided by residues Ile193 and 198-200; that span reads GDA. Asp199 lines the 5-phospho-alpha-D-ribose 1-diphosphate pocket.

It belongs to the UPRTase family. The cofactor is Mg(2+).

The enzyme catalyses UMP + diphosphate = 5-phospho-alpha-D-ribose 1-diphosphate + uracil. The protein operates within pyrimidine metabolism; UMP biosynthesis via salvage pathway; UMP from uracil: step 1/1. With respect to regulation, allosterically activated by GTP. In terms of biological role, catalyzes the conversion of uracil and 5-phospho-alpha-D-ribose 1-diphosphate (PRPP) to UMP and diphosphate. The sequence is that of Uracil phosphoribosyltransferase from Bordetella pertussis (strain Tohama I / ATCC BAA-589 / NCTC 13251).